The chain runs to 178 residues: Large ribosomal subunit protein uL6 (178 aa).

It belongs to the universal ribosomal protein uL6 family. As to quaternary structure, part of the 50S ribosomal subunit.

In terms of biological role, this protein binds to the 23S rRNA, and is important in its secondary structure. It is located near the subunit interface in the base of the L7/L12 stalk, and near the tRNA binding site of the peptidyltransferase center. The protein is Large ribosomal subunit protein uL6 of Streptococcus equi subsp. zooepidemicus (strain H70).